A 427-amino-acid polypeptide reads, in one-letter code: Glutamate-1-semialdehyde 2,1-aminomutase (427 aa).

Lys265 bears the N6-(pyridoxal phosphate)lysine mark.

This sequence belongs to the class-III pyridoxal-phosphate-dependent aminotransferase family. HemL subfamily. In terms of assembly, homodimer. The cofactor is pyridoxal 5'-phosphate.

The protein localises to the cytoplasm. The enzyme catalyses (S)-4-amino-5-oxopentanoate = 5-aminolevulinate. The protein operates within porphyrin-containing compound metabolism; protoporphyrin-IX biosynthesis; 5-aminolevulinate from L-glutamyl-tRNA(Glu): step 2/2. The chain is Glutamate-1-semialdehyde 2,1-aminomutase from Burkholderia ambifaria (strain ATCC BAA-244 / DSM 16087 / CCUG 44356 / LMG 19182 / AMMD) (Burkholderia cepacia (strain AMMD)).